The following is a 255-amino-acid chain: Mediator of RNA polymerase II transcription subunit 18 (255 aa).

This sequence belongs to the Mediator complex subunit 18 family. As to quaternary structure, component of the Mediator complex.

The protein localises to the nucleus. Component of the Mediator complex, a coactivator involved in the regulated transcription of nearly all RNA polymerase II-dependent genes. Mediator functions as a bridge to convey information from gene-specific regulatory proteins to the basal RNA polymerase II transcription machinery. Mediator is recruited to promoters by direct interactions with regulatory proteins and serves as a scaffold for the assembly of a functional preinitiation complex with RNA polymerase II and the general transcription factors. This is Mediator of RNA polymerase II transcription subunit 18 (SRB5) from Kluyveromyces lactis (strain ATCC 8585 / CBS 2359 / DSM 70799 / NBRC 1267 / NRRL Y-1140 / WM37) (Yeast).